Here is a 274-residue protein sequence, read N- to C-terminus: MEWVDTGSAMQAPDATFADTREARQAIRAGRWRRHTSGLAPAYVQGNLVILPVDLASDFMRFCQSNPKPCPLLAVGQAGDPALPTLGRDIDIRTDVPAYRVYRDGVLVGEVDDLKALWRDDFVAFVLGCSFSFEHGLIEAGIPLRHVDEGKNVAMYRTNIQTVPAGPFHGPMVVSMRPMKAADAIRAVQITARVPQVHGAPVHIGDPALIGIADITQPDFGDAVRIAPDELPVFWACGVTPQAVVMAAKPALCITHSPGYMLITDMLNRDLPFA.

It belongs to the D-glutamate cyclase family.

This is Putative hydro-lyase Veis_4744 from Verminephrobacter eiseniae (strain EF01-2).